The following is a 159-amino-acid chain: Small ribosomal subunit protein uS4 (159 aa).

The S4 RNA-binding domain maps to 106-158 (RRLQTIVYRKGLAKSIYHARQLVVHGHVAVAGRRVTSPGFLVPRDLEDKITLI).

This sequence belongs to the universal ribosomal protein uS4 family. Part of the 30S ribosomal subunit. Contacts protein S5. The interaction surface between S4 and S5 is involved in control of translational fidelity.

Its function is as follows. One of the primary rRNA binding proteins, it binds directly to 16S rRNA where it nucleates assembly of the body of the 30S subunit. In terms of biological role, with S5 and S12 plays an important role in translational accuracy. This chain is Small ribosomal subunit protein uS4, found in Pyrobaculum islandicum (strain DSM 4184 / JCM 9189 / GEO3).